The sequence spans 226 residues: Beta-casein (226 aa).

Positions Met-1 to Ala-15 are cleaved as a signal peptide. Position 18 is a phosphothreonine; in form 5-P (Thr-18). Ser-21 carries the post-translational modification Phosphoserine; in form 4-P and form 5-P. Ser-23 bears the Phosphoserine; in form 3-P, form 4-P and form 5-P mark. Residues Ser-24 and Ser-25 each carry the phosphoserine; in form 1-P, form 2-P, form 3-P, form 4-P and form 5-P modification.

Belongs to the beta-casein family. Post-translationally, form 1-P is phosphorylated once; half of the molecules are phosphorylated on Ser-24, half on Ser-25. Mammary gland specific. Secreted in milk.

It localises to the secreted. In terms of biological role, important role in determination of the surface properties of the casein micelles. The polypeptide is Beta-casein (CSN2) (Homo sapiens (Human)).